Consider the following 673-residue polypeptide: Probable lysophospholipase 4 (673 aa).

An N-terminal signal peptide occupies residues 1–19 (MYVNYIGLFAFVQISLTLA). N-linked (GlcNAc...) asparagine glycans are attached at residues Asn-72, Asn-125, Asn-191, Asn-194, Asn-272, Asn-301, Asn-374, Asn-404, Asn-409, Asn-481, Asn-516, Asn-545, and Asn-574. Residues 74-615 (TCSNDNLLRP…QEYCWDGTLA (542 aa)) enclose the PLA2c domain. The tract at residues 631 to 653 (TTSRAPSGTTSGTASSTTSSSVA) is disordered.

This sequence belongs to the lysophospholipase family.

The protein resides in the secreted. The enzyme catalyses a 1-acyl-sn-glycero-3-phosphocholine + H2O = sn-glycerol 3-phosphocholine + a fatty acid + H(+). In terms of biological role, catalyzes the release of fatty acids from lysophospholipids. The sequence is that of Probable lysophospholipase 4 (plb4) from Schizosaccharomyces pombe (strain 972 / ATCC 24843) (Fission yeast).